The primary structure comprises 150 residues: Large ribosomal subunit protein bL9 (150 aa).

This sequence belongs to the bacterial ribosomal protein bL9 family.

Its function is as follows. Binds to the 23S rRNA. The sequence is that of Large ribosomal subunit protein bL9 from Serratia proteamaculans (strain 568).